Reading from the N-terminus, the 205-residue chain is Glycerol-3-phosphate acyltransferase (205 aa).

The next 5 helical transmembrane spans lie at 4–24, 80–100, 107–127, 130–150, and 155–175; these read IAPG…AILV, PFWL…PVFF, GVAT…GVMA, WLLT…SALI, and VWWF…LILL.

It belongs to the PlsY family. Probably interacts with PlsX.

It is found in the cell inner membrane. The enzyme catalyses an acyl phosphate + sn-glycerol 3-phosphate = a 1-acyl-sn-glycero-3-phosphate + phosphate. Its pathway is lipid metabolism; phospholipid metabolism. In terms of biological role, catalyzes the transfer of an acyl group from acyl-phosphate (acyl-PO(4)) to glycerol-3-phosphate (G3P) to form lysophosphatidic acid (LPA). This enzyme utilizes acyl-phosphate as fatty acyl donor, but not acyl-CoA or acyl-ACP. The sequence is that of Glycerol-3-phosphate acyltransferase from Klebsiella pneumoniae subsp. pneumoniae (strain ATCC 700721 / MGH 78578).